A 124-amino-acid chain; its full sequence is Large ribosomal subunit protein uL18 (124 aa).

Belongs to the universal ribosomal protein uL18 family. Part of the 50S ribosomal subunit; part of the 5S rRNA/L5/L18/L25 subcomplex. Contacts the 5S and 23S rRNAs.

In terms of biological role, this is one of the proteins that bind and probably mediate the attachment of the 5S RNA into the large ribosomal subunit, where it forms part of the central protuberance. The protein is Large ribosomal subunit protein uL18 of Thermomicrobium roseum (strain ATCC 27502 / DSM 5159 / P-2).